Consider the following 146-residue polypeptide: Gene 19.2 protein (146 aa).

This chain is Gene 19.2 protein (19.2), found in Escherichia coli (Bacteriophage T3).